We begin with the raw amino-acid sequence, 54 residues long: Metallothionein-2 (54 aa).

The protein belongs to the metallothionein superfamily. Type 11 family.

The protein is Metallothionein-2 (MTP2) of Yarrowia lipolytica (strain CLIB 122 / E 150) (Yeast).